Here is a 126-residue protein sequence, read N- to C-terminus: Large ribosomal subunit protein uL22 (126 aa).

The protein belongs to the universal ribosomal protein uL22 family. In terms of assembly, part of the 50S ribosomal subunit.

Functionally, this protein binds specifically to 23S rRNA; its binding is stimulated by other ribosomal proteins, e.g. L4, L17, and L20. It is important during the early stages of 50S assembly. It makes multiple contacts with different domains of the 23S rRNA in the assembled 50S subunit and ribosome. The globular domain of the protein is located near the polypeptide exit tunnel on the outside of the subunit, while an extended beta-hairpin is found that lines the wall of the exit tunnel in the center of the 70S ribosome. The chain is Large ribosomal subunit protein uL22 from Sphingopyxis alaskensis (strain DSM 13593 / LMG 18877 / RB2256) (Sphingomonas alaskensis).